A 957-amino-acid polypeptide reads, in one-letter code: Glycine dehydrogenase (decarboxylating) (957 aa).

Residue Lys-708 is modified to N6-(pyridoxal phosphate)lysine.

The protein belongs to the GcvP family. In terms of assembly, the glycine cleavage system is composed of four proteins: P, T, L and H. The cofactor is pyridoxal 5'-phosphate.

It catalyses the reaction N(6)-[(R)-lipoyl]-L-lysyl-[glycine-cleavage complex H protein] + glycine + H(+) = N(6)-[(R)-S(8)-aminomethyldihydrolipoyl]-L-lysyl-[glycine-cleavage complex H protein] + CO2. In terms of biological role, the glycine cleavage system catalyzes the degradation of glycine. The P protein binds the alpha-amino group of glycine through its pyridoxal phosphate cofactor; CO(2) is released and the remaining methylamine moiety is then transferred to the lipoamide cofactor of the H protein. This Salmonella agona (strain SL483) protein is Glycine dehydrogenase (decarboxylating).